The sequence spans 377 residues: Lipoyl synthase, mitochondrial (377 aa).

The N-terminal 77 residues, 1-77 (MFRRGGRILN…LPNGSVHKRL (77 aa)), are a transit peptide targeting the mitochondrion. Positions 107, 112, 118, 138, 142, 145, and 353 each coordinate [4Fe-4S] cluster. The Radical SAM core domain occupies 123–342 (DKTRATATIM…RKRAEELGFL (220 aa)).

The protein belongs to the radical SAM superfamily. Lipoyl synthase family. [4Fe-4S] cluster serves as cofactor.

Its subcellular location is the mitochondrion. The enzyme catalyses [[Fe-S] cluster scaffold protein carrying a second [4Fe-4S](2+) cluster] + N(6)-octanoyl-L-lysyl-[protein] + 2 oxidized [2Fe-2S]-[ferredoxin] + 2 S-adenosyl-L-methionine + 4 H(+) = [[Fe-S] cluster scaffold protein] + N(6)-[(R)-dihydrolipoyl]-L-lysyl-[protein] + 4 Fe(3+) + 2 hydrogen sulfide + 2 5'-deoxyadenosine + 2 L-methionine + 2 reduced [2Fe-2S]-[ferredoxin]. It functions in the pathway protein modification; protein lipoylation via endogenous pathway; protein N(6)-(lipoyl)lysine from octanoyl-[acyl-carrier-protein]: step 2/2. In terms of biological role, catalyzes the radical-mediated insertion of two sulfur atoms into the C-6 and C-8 positions of the octanoyl moiety bound to the lipoyl domains of lipoate-dependent enzymes, thereby converting the octanoylated domains into lipoylated derivatives. In Schizosaccharomyces japonicus (strain yFS275 / FY16936) (Fission yeast), this protein is Lipoyl synthase, mitochondrial.